We begin with the raw amino-acid sequence, 202 residues long: 3-isopropylmalate dehydratase small subunit (202 aa).

It belongs to the LeuD family. LeuD type 1 subfamily. Heterodimer of LeuC and LeuD.

The enzyme catalyses (2R,3S)-3-isopropylmalate = (2S)-2-isopropylmalate. The protein operates within amino-acid biosynthesis; L-leucine biosynthesis; L-leucine from 3-methyl-2-oxobutanoate: step 2/4. Its function is as follows. Catalyzes the isomerization between 2-isopropylmalate and 3-isopropylmalate, via the formation of 2-isopropylmaleate. The sequence is that of 3-isopropylmalate dehydratase small subunit from Paenarthrobacter aurescens (strain TC1).